The sequence spans 385 residues: Putative nickel insertion protein (385 aa).

The protein belongs to the LarC family.

The sequence is that of Putative nickel insertion protein from Geobacter sp. (strain M21).